Here is a 307-residue protein sequence, read N- to C-terminus: MPIKIPDTLPAFETLVNEGVRVMTETAAVRQDIRPLQIGLLNLMPNKIKTEIQIARLIGATPLQVELTLVRIGGYRPKNTPEEHLFAFYETWEEVKGRKFDGFIITGAPVETLDYEEVTYWDELKSIFEWTETHVHSTLNVCWGAMAAIYHFHGVPKYPLKEKAFGVYRHQNLKPSSVYLNGFSDDFAVPVSRWTEVRRADIDRVPSLEILMESKEMGVCLVHEKKGNRLYMFNHVEYDSTSLSDEYFRDVDAGVPIKLPHDYFPHNDADLPPQNRWRSHAHLFFGNWINEMYQTTPYELEKIGTGD.

Cys-142 (acyl-thioester intermediate) is an active-site residue. Residues Lys-163 and Ser-192 each contribute to the substrate site. His-235 (proton acceptor) is an active-site residue. The active site involves Glu-237. Substrate is bound at residue Arg-249.

Belongs to the MetA family.

It is found in the cytoplasm. It carries out the reaction L-homoserine + acetyl-CoA = O-acetyl-L-homoserine + CoA. It participates in amino-acid biosynthesis; L-methionine biosynthesis via de novo pathway; O-acetyl-L-homoserine from L-homoserine: step 1/1. Functionally, transfers an acetyl group from acetyl-CoA to L-homoserine, forming acetyl-L-homoserine. In Sinorhizobium fredii (strain NBRC 101917 / NGR234), this protein is Homoserine O-acetyltransferase.